We begin with the raw amino-acid sequence, 560 residues long: Trafficking protein particle complex II-specific subunit 65 (560 aa).

The segment at 164 to 193 (SSKNTNNHLEKNNRATHRVSSKNSEVHEAD) is disordered. Ser-393 and Ser-398 each carry phosphoserine.

As to quaternary structure, part of the multisubunit TRAPP (transport protein particle) II complex composed of BET3, BET5, TRS20, TRS23, TRS31, TRS33, TRS65, TRS120 and TRS130. Interacts directly with TRS120 and TRS130.

Its subcellular location is the cytoplasm. The protein resides in the golgi apparatus. It localises to the cis-Golgi network. Its pathway is glycan metabolism; beta-glucan biosynthesis. In terms of biological role, specific subunit of the TRAPP II complex, a highly conserved vesicle tethering complex that functions in the late Golgi as a guanine nucleotide exchanger (GEF) for the Golgi YPT1 GTPase. TRS65 plays a role in the YPT GEF activity of TRAPP II in concert with the two other TRAPP II-specific subunits TRS120 and TRS130. Involved in cell wall (1--&gt;6)-beta-glucan synthesis. The chain is Trafficking protein particle complex II-specific subunit 65 (TRS65) from Saccharomyces cerevisiae (strain ATCC 204508 / S288c) (Baker's yeast).